Here is a 206-residue protein sequence, read N- to C-terminus: Protein MIS12 homolog (206 aa).

Residues 102–206 adopt a coiled-coil conformation; sequence DKCQETNPFS…EKESRRLETQ (105 aa).

This sequence belongs to the mis12 family. As to quaternary structure, component of the MIS12 complex composed of MIS12, DSN1, NSL1 and PMF1. Also interacts with KNL1, CBX3, CBX5, NDC80 and ZWINT.

Its subcellular location is the chromosome. The protein localises to the centromere. It is found in the kinetochore. Part of the MIS12 complex which is required for normal chromosome alignment and segregation and for kinetochore formation during mitosis. Essential for proper kinetochore microtubule attachments. This is Protein MIS12 homolog from Mus musculus (Mouse).